The sequence spans 210 residues: Large ribosomal subunit protein uL3 (210 aa).

The segment at 134 to 153 (THGNSLSHRAPGSIGQNQTP) is disordered. Gln151 carries the N5-methylglutamine modification.

Belongs to the universal ribosomal protein uL3 family. Part of the 50S ribosomal subunit. Forms a cluster with proteins L14 and L19. Post-translationally, methylated by PrmB.

One of the primary rRNA binding proteins, it binds directly near the 3'-end of the 23S rRNA, where it nucleates assembly of the 50S subunit. This chain is Large ribosomal subunit protein uL3, found in Aeromonas salmonicida (strain A449).